The sequence spans 249 residues: MAGHSKFKNIQHRKGAQDKKKAKLFASLVREISLSAKSGADIQYNPRLRAAISAAKFNNLPKDRIEKAIAHANNKDNYENYFEITYEGIIFDGIAIIVEALTDNTNRTAANVRAIFSKYGGNLVGTGNASFLFDRLGIIKFESKVSTSEELFDAAIELGAEDIELDEEYHVVYTPIKLFTNIIEELAQLFGYPVESYIGWRPRNTVLISDTEKAQKLIKLVNALDDNDDVQRFFGNYEFSEQIYNNLLT.

This sequence belongs to the TACO1 family.

Its subcellular location is the cytoplasm. This chain is Probable transcriptional regulatory protein OTT_1378, found in Orientia tsutsugamushi (strain Ikeda) (Rickettsia tsutsugamushi).